The primary structure comprises 378 residues: uncharacterized protein (378 aa).

The Guanylate cyclase domain occupies 208–317 (GIGFADLSSF…NPVNLAARLV (110 aa)).

The protein belongs to the adenylyl cyclase class-4/guanylyl cyclase family.

This is an uncharacterized protein from Mycobacterium bovis (strain ATCC BAA-935 / AF2122/97).